Consider the following 362-residue polypeptide: MNSCDFRVFLQEFGTTVHLSLPGSVSEKERLLLKLLMQGMSVTEISQYRNRSAKTISHQKKQLFEKLGIQSDITFWRDIFFQYNPEIISATGSNSHRYINDNHYHHIVTPEAISLALENHEFKPWIQPVFCAQTGVLTGCEVLVRWEHPQTGIIPPDQFIPLAESSGLIVIMTRQLMKQTADILMPVKHLLPDNFHIGINVSAGCFLAAGFEKECLNLVNKLGNDKIKLVLELTERNPIPVTPEARAIFDSLHQHNITFALDDFGTGYATYRYLQAFPVDFIKIDKSFVQMASVDEISGHIVDNIVELARKPGLSIVAEGVETQEQADLMIGKGVHFLQGYLYSPPVPGNKFISEWVMKAGG.

One can recognise an HTH luxR-type domain in the interval 18–83; that stretch reads HLSLPGSVSE…TFWRDIFFQY (66 aa). Residues 42-61 constitute a DNA-binding region (H-T-H motif); the sequence is VTEISQYRNRSAKTISHQKK. The EAL domain maps to 106–360; sequence HIVTPEAISL…KFISEWVMKA (255 aa). Gln-127 lines the substrate pocket. Residue Glu-141 participates in Mg(2+) binding. Substrate contacts are provided by residues 144–145 and Asn-200; that span reads VR. Mg(2+)-binding residues include Asn-200, Glu-232, and Asp-262. Substrate contacts are provided by residues Asp-262, Lys-286, 319–322, and Tyr-341; that span reads EGVE.

As to quaternary structure, is in a fast thermodynamic monomer-homodimer equilibrium. Dimerization is required for PDE activity. Dimerization affinity is increased about 100-fold upon substrate binding. Requires Mg(2+) as cofactor. It depends on Mn(2+) as a cofactor.

The enzyme catalyses 3',3'-c-di-GMP + H2O = 5'-phosphoguanylyl(3'-&gt;5')guanosine + H(+). With respect to regulation, strongly inhibited by Ca(2+). Its function is as follows. Acts both as an enzyme and as a c-di-GMP sensor to couple transcriptional activity to the c-di-GMP status of the cell. Phosphodiesterase (PDE) that catalyzes the hydrolysis of cyclic-di-GMP (c-di-GMP) to 5'-pGpG. Also acts as a transcription factor to control its own expression. The chain is Cyclic di-GMP phosphodiesterase PdeL from Escherichia coli (strain K12).